The chain runs to 626 residues: Basic helix-loop-helix ARNT-like protein 1 (626 aa).

The interval 1 to 58 (MADQRMDISSTISDFMSPGPTDLLSSSLGTSGVDCNRKRKGSATDYQESMDTDKDDPH) is disordered. Ser-17 carries the phosphoserine; by GSK3-beta modification. The span at 17–32 (SPGPTDLLSSSLGTSG) shows a compositional bias: low complexity. The residue at position 21 (Thr-21) is a Phosphothreonine; by GSK3-beta. The Nuclear localization signal motif lies at 36–41 (NRKRKG). The bHLH domain occupies 72 to 125 (NAREAHSQIEKRRRDKMNSFIDELASLVPTCNAMSRKLDKLTVLRMAVQHMKTL). Residue Ser-78 is modified to Phosphoserine. At Ser-90 the chain carries Phosphoserine; by CK2. Positions 142–152 (LSDDELKHLIL) match the Nuclear export signal 1 motif. Residues 143–215 (SDDELKHLIL…EQLSSSDTAP (73 aa)) form the PAS 1 domain. Lys-252 participates in a covalent cross-link: Glycyl lysine isopeptide (Lys-Gly) (interchain with G-Cter in SUMO2 and SUMO3). A Glycyl lysine isopeptide (Lys-Gly) (interchain with G-Cter in SUMO); alternate cross-link involves residue Lys-259. Residue Lys-259 forms a Glycyl lysine isopeptide (Lys-Gly) (interchain with G-Cter in SUMO2); alternate linkage. One can recognise a PAS 2 domain in the interval 326-396 (PQPVNGEIRV…ECHRQVLQTR (71 aa)). Positions 361 to 369 (LAYLPQELL) match the Nuclear export signal 2 motif. One can recognise a PAC domain in the interval 401–444 (TNCYKFKIKDGSFITLRSRWFSFMNPWTKEVEYIVSTNTVVLAN). Disordered stretches follow at residues 459-492 (SPHSMDSMLPSGEGGPKRTHPTVPGIPGGTRAGA) and 511-595 (GSSP…SPSN). An interaction with CIART region spans residues 508–588 (RIRGSSPSSC…IGIDMIDNDQ (81 aa)). Low complexity predominate over residues 511 to 521 (GSSPSSCGSSP). An N6-acetyllysine modification is found at Lys-538.

In terms of assembly, component of the circadian clock oscillator which includes the CRY1/2 proteins, CLOCK or NPAS2, BMAL1 or BMAL2, CSNK1D and/or CSNK1E, TIMELESS and the PER1/2/3 proteins. Forms a heterodimer with CLOCK. The CLOCK-BMAL1 heterodimer is required for E-box-dependent transactivation, for CLOCK nuclear translocation and degradation, and, for phosphorylation of both CLOCK and BMAL1. Part of a nuclear complex which also includes RACK1 and PRKCA; RACK1 and PRKCA are recruited to the complex in a circadian manner. Interacts with NPAS2. Interacts with EZH2. Interacts with SUMO3. Interacts with SIRT1. Interacts with AHR. Interacts with ID1, ID2 and ID3. Interacts with DDX4. Interacts with OGT. Interacts with EED and SUZ12. Interacts with MTA1. Interacts with CIART. Interacts with HSP90. Interacts with KAT2B and EP300. Interacts with BHLHE40/DEC1 and BHLHE41/DEC2. Interacts with RELB and the interaction is enhanced in the presence of CLOCK. Interacts with PER1, PER2, CRY1 and CRY2 and this interaction requires a translocation to the nucleus. Interaction of the CLOCK-BMAL1 heterodimer with PER or CRY inhibits transcription activation. Interaction of the CLOCK-BMAL1 with CRY1 is independent of DNA but with PER2 is off DNA. The CLOCK-BMAL1 heterodimer interacts with GSK3B. Interacts with KDM5A. Interacts with KMT2A; in a circadian manner. Interacts with UBE3A. Interacts with PRKCG. Interacts with MAGEL2. Interacts with NCOA2. Interacts with THRAP3. The CLOCK-BMAL1 heterodimer interacts with PASD1. Interacts with PASD1. Interacts with USP9X. Interacts with PIWIL2 (via PIWI domain). Interacts with HDAC3. Interacts with HNF4A. Ubiquitinated, leading to its proteasomal degradation. Deubiquitinated by USP9X. In terms of processing, O-glycosylated; contains O-GlcNAc. O-glycosylation by OGT prevents protein degradation by inhibiting ubiquitination. It also stabilizes the CLOCK-BMAL1 heterodimer thereby increasing CLOCK-BMAL1-mediated transcription of genes in the negative loop of the circadian clock such as PER1/2/3 and CRY1/2. Post-translationally, acetylated on Lys-538 by CLOCK during the repression phase of the circadian cycle. Acetylation facilitates recruitment of CRY1 protein and initiates the repression phase of the circadian cycle. Acetylated at Lys-538 by KAT5 during the activation phase of the cycle, leading to recruitment of the positive transcription elongation factor b (P-TEFb) and BRD4, followed by productive elongation of circadian transcripts. Deacetylated by SIRT1, which may result in decreased protein stability. Phosphorylated upon dimerization with CLOCK. Phosphorylation enhances the transcriptional activity, alters the subcellular localization and decreases the stability of the CLOCK-BMAL1 heterodimer by promoting its degradation. Phosphorylation shows circadian variations in the liver with a peak between CT10 to CT14. Phosphorylation at Ser-90 by CK2 is essential for its nuclear localization, its interaction with CLOCK and controls CLOCK nuclear entry. Dephosphorylation at Ser-78 is important for dimerization with CLOCK and transcriptional activity. In terms of processing, sumoylated on Lys-259 upon dimerization with CLOCK. Predominantly conjugated to poly-SUMO2/3 rather than SUMO1 and the level of these conjugates undergo rhythmic variation, peaking at CT9-CT12. Sumoylation localizes it exclusively to the PML body and promotes its ubiquitination in the PML body, ubiquitin-dependent proteasomal degradation and the transcriptional activity of the CLOCK-BMAL1 heterodimer. Post-translationally, undergoes lysosome-mediated degradation in a time-dependent manner in the liver.

It localises to the nucleus. The protein resides in the cytoplasm. It is found in the PML body. Transcriptional activator which forms a core component of the circadian clock. The circadian clock, an internal time-keeping system, regulates various physiological processes through the generation of approximately 24 hour circadian rhythms in gene expression, which are translated into rhythms in metabolism and behavior. It is derived from the Latin roots 'circa' (about) and 'diem' (day) and acts as an important regulator of a wide array of physiological functions including metabolism, sleep, body temperature, blood pressure, endocrine, immune, cardiovascular, and renal function. Consists of two major components: the central clock, residing in the suprachiasmatic nucleus (SCN) of the brain, and the peripheral clocks that are present in nearly every tissue and organ system. Both the central and peripheral clocks can be reset by environmental cues, also known as Zeitgebers (German for 'timegivers'). The predominant Zeitgeber for the central clock is light, which is sensed by retina and signals directly to the SCN. The central clock entrains the peripheral clocks through neuronal and hormonal signals, body temperature and feeding-related cues, aligning all clocks with the external light/dark cycle. Circadian rhythms allow an organism to achieve temporal homeostasis with its environment at the molecular level by regulating gene expression to create a peak of protein expression once every 24 hours to control when a particular physiological process is most active with respect to the solar day. Transcription and translation of core clock components (CLOCK, NPAS2, BMAL1, BMAL2, PER1, PER2, PER3, CRY1 and CRY2) plays a critical role in rhythm generation, whereas delays imposed by post-translational modifications (PTMs) are important for determining the period (tau) of the rhythms (tau refers to the period of a rhythm and is the length, in time, of one complete cycle). A diurnal rhythm is synchronized with the day/night cycle, while the ultradian and infradian rhythms have a period shorter and longer than 24 hours, respectively. Disruptions in the circadian rhythms contribute to the pathology of cardiovascular diseases, cancer, metabolic syndromes and aging. A transcription/translation feedback loop (TTFL) forms the core of the molecular circadian clock mechanism. Transcription factors, CLOCK or NPAS2 and BMAL1 or BMAL2, form the positive limb of the feedback loop, act in the form of a heterodimer and activate the transcription of core clock genes and clock-controlled genes (involved in key metabolic processes), harboring E-box elements (5'-CACGTG-3') within their promoters. The core clock genes: PER1/2/3 and CRY1/2 which are transcriptional repressors form the negative limb of the feedback loop and interact with the CLOCK|NPAS2-BMAL1|BMAL2 heterodimer inhibiting its activity and thereby negatively regulating their own expression. This heterodimer also activates nuclear receptors NR1D1/2 and RORA/B/G, which form a second feedback loop and which activate and repress BMAL1 transcription, respectively. BMAL1 positively regulates myogenesis and negatively regulates adipogenesis via the transcriptional control of the genes of the canonical Wnt signaling pathway. Plays a role in normal pancreatic beta-cell function; regulates glucose-stimulated insulin secretion via the regulation of antioxidant genes NFE2L2/NRF2 and its targets SESN2, PRDX3, CCLC and CCLM. Negatively regulates the mTORC1 signaling pathway; regulates the expression of MTOR and DEPTOR. Controls diurnal oscillations of Ly6C inflammatory monocytes; rhythmic recruitment of the PRC2 complex imparts diurnal variation to chemokine expression that is necessary to sustain Ly6C monocyte rhythms. Regulates the expression of HSD3B2, STAR, PTGS2, CYP11A1, CYP19A1 and LHCGR in the ovary and also the genes involved in hair growth. Plays an important role in adult hippocampal neurogenesis by regulating the timely entry of neural stem/progenitor cells (NSPCs) into the cell cycle and the number of cell divisions that take place prior to cell-cycle exit. Regulates the circadian expression of CIART and KLF11. The CLOCK-BMAL1 heterodimer regulates the circadian expression of SERPINE1/PAI1, VWF, B3, CCRN4L/NOC, NAMPT, DBP, MYOD1, PPARGC1A, PPARGC1B, SIRT1, GYS2, F7, NGFR, GNRHR, BHLHE40/DEC1, ATF4, MTA1, KLF10 and also genes implicated in glucose and lipid metabolism. Promotes rhythmic chromatin opening, regulating the DNA accessibility of other transcription factors. The NPAS2-BMAL1 heterodimer positively regulates the expression of MAOA, F7 and LDHA and modulates the circadian rhythm of daytime contrast sensitivity by regulating the rhythmic expression of adenylate cyclase type 1 (ADCY1) in the retina. The preferred binding motif for the CLOCK-BMAL1 heterodimer is 5'-CACGTGA-3', which contains a flanking adenine nucleotide at the 3-prime end of the canonical 6-nucleotide E-box sequence. CLOCK specifically binds to the half-site 5'-CAC-3', while BMAL1 binds to the half-site 5'-GTGA-3'. The CLOCK-BMAL1 heterodimer also recognizes the non-canonical E-box motifs 5'-AACGTGA-3' and 5'-CATGTGA-3'. Essential for the rhythmic interaction of CLOCK with ASS1 and plays a critical role in positively regulating CLOCK-mediated acetylation of ASS1. Plays a role in protecting against lethal sepsis by limiting the expression of immune checkpoint protein CD274 in macrophages in a PKM2-dependent manner. Regulates the diurnal rhythms of skeletal muscle metabolism via transcriptional activation of genes promoting triglyceride synthesis (DGAT2) and metabolic efficiency (COQ10B). In Mesocricetus auratus (Golden hamster), this protein is Basic helix-loop-helix ARNT-like protein 1 (BMAL1).